A 398-amino-acid polypeptide reads, in one-letter code: Putative isocitrate lyase subunit B (398 aa).

It belongs to the isocitrate lyase/PEP mutase superfamily. Isocitrate lyase family. It depends on Mg(2+) as a cofactor.

It carries out the reaction D-threo-isocitrate = glyoxylate + succinate. Together with AceAa, they could catalyze the formation of succinate and glyoxylate from isocitrate. This is Putative isocitrate lyase subunit B (aceAb) from Mycobacterium tuberculosis (strain ATCC 25618 / H37Rv).